The sequence spans 62 residues: Large ribosomal subunit protein bL28 (62 aa).

It belongs to the bacterial ribosomal protein bL28 family.

This is Large ribosomal subunit protein bL28 from Bacillus velezensis (strain DSM 23117 / BGSC 10A6 / LMG 26770 / FZB42) (Bacillus amyloliquefaciens subsp. plantarum).